A 284-amino-acid chain; its full sequence is Lipoyl synthase (284 aa).

The [4Fe-4S] cluster site is built by C34, C39, C45, C60, C64, C67, and S272. A Radical SAM core domain is found at F46–K261.

It belongs to the radical SAM superfamily. Lipoyl synthase family. Requires [4Fe-4S] cluster as cofactor.

The protein localises to the cytoplasm. The catalysed reaction is [[Fe-S] cluster scaffold protein carrying a second [4Fe-4S](2+) cluster] + N(6)-octanoyl-L-lysyl-[protein] + 2 oxidized [2Fe-2S]-[ferredoxin] + 2 S-adenosyl-L-methionine + 4 H(+) = [[Fe-S] cluster scaffold protein] + N(6)-[(R)-dihydrolipoyl]-L-lysyl-[protein] + 4 Fe(3+) + 2 hydrogen sulfide + 2 5'-deoxyadenosine + 2 L-methionine + 2 reduced [2Fe-2S]-[ferredoxin]. It functions in the pathway protein modification; protein lipoylation via endogenous pathway; protein N(6)-(lipoyl)lysine from octanoyl-[acyl-carrier-protein]: step 2/2. Functionally, catalyzes the radical-mediated insertion of two sulfur atoms into the C-6 and C-8 positions of the octanoyl moiety bound to the lipoyl domains of lipoate-dependent enzymes, thereby converting the octanoylated domains into lipoylated derivatives. This chain is Lipoyl synthase, found in Caldanaerobacter subterraneus subsp. tengcongensis (strain DSM 15242 / JCM 11007 / NBRC 100824 / MB4) (Thermoanaerobacter tengcongensis).